The chain runs to 457 residues: Putative HD domain-containing protein L394 (457 aa).

The 142-residue stretch at 65-206 (RLEHSIGVYD…GIDVDKFDYL (142 aa)) folds into the HD domain.

This is Putative HD domain-containing protein L394 from Acanthamoeba polyphaga mimivirus (APMV).